The primary structure comprises 239 residues: Serine protease SplF (239 aa).

Residues 1–36 (MNKNIIIKSIAALTILTSITGVGTTMVEGIQQTAKA) form the signal peptide. Catalysis depends on charge relay system residues histidine 75, aspartate 114, and serine 192.

This sequence belongs to the peptidase S1B family.

The protein resides in the secreted. The sequence is that of Serine protease SplF (splF) from Staphylococcus aureus (strain NCTC 8325 / PS 47).